A 311-amino-acid chain; its full sequence is Ornithine carbamoyltransferase (311 aa).

Carbamoyl phosphate is bound by residues 54 to 58 (STRTR), asparagine 81, arginine 104, and 131 to 134 (HPCQ). L-ornithine is bound by residues asparagine 164, aspartate 225, and 229-230 (DM). Residues 268–271 (HDMP), threonine 279, and arginine 297 each bind carbamoyl phosphate.

This sequence belongs to the aspartate/ornithine carbamoyltransferase superfamily. OTCase family.

It is found in the cytoplasm. The catalysed reaction is carbamoyl phosphate + L-ornithine = L-citrulline + phosphate + H(+). It functions in the pathway amino-acid biosynthesis; L-arginine biosynthesis; L-arginine from L-ornithine and carbamoyl phosphate: step 1/3. Reversibly catalyzes the transfer of the carbamoyl group from carbamoyl phosphate (CP) to the N(epsilon) atom of ornithine (ORN) to produce L-citrulline. The chain is Ornithine carbamoyltransferase (argF) from Leptospira interrogans serogroup Icterohaemorrhagiae serovar copenhageni (strain Fiocruz L1-130).